The following is a 496-amino-acid chain: UDP-N-acetylmuramoyl-L-alanyl-D-glutamate--2,6-diaminopimelate ligase (496 aa).

Positions 24 and 26 each coordinate UDP-N-acetyl-alpha-D-muramoyl-L-alanyl-D-glutamate. ATP is bound at residue 109–115 (GTNGKTS). Residues 151–152 (TT), S178, Q184, and R186 contribute to the UDP-N-acetyl-alpha-D-muramoyl-L-alanyl-D-glutamate site. At K218 the chain carries N6-carboxylysine. Meso-2,6-diaminopimelate contacts are provided by residues R387, 411-414 (DNPR), G462, and E466. Positions 411 to 414 (DNPR) match the Meso-diaminopimelate recognition motif motif.

The protein belongs to the MurCDEF family. MurE subfamily. Mg(2+) is required as a cofactor. In terms of processing, carboxylation is probably crucial for Mg(2+) binding and, consequently, for the gamma-phosphate positioning of ATP.

The protein localises to the cytoplasm. It carries out the reaction UDP-N-acetyl-alpha-D-muramoyl-L-alanyl-D-glutamate + meso-2,6-diaminopimelate + ATP = UDP-N-acetyl-alpha-D-muramoyl-L-alanyl-gamma-D-glutamyl-meso-2,6-diaminopimelate + ADP + phosphate + H(+). Its pathway is cell wall biogenesis; peptidoglycan biosynthesis. In terms of biological role, catalyzes the addition of meso-diaminopimelic acid to the nucleotide precursor UDP-N-acetylmuramoyl-L-alanyl-D-glutamate (UMAG) in the biosynthesis of bacterial cell-wall peptidoglycan. The polypeptide is UDP-N-acetylmuramoyl-L-alanyl-D-glutamate--2,6-diaminopimelate ligase (Pseudomonas putida (strain ATCC 47054 / DSM 6125 / CFBP 8728 / NCIMB 11950 / KT2440)).